The following is a 624-amino-acid chain: MASIARLPDIVANKISAGEVVQRPASVVKELIENSIDAGASRITVIIKDAGRQLVQIIDNGCGMESDDVLLSVERFATSKISEVDDLDALRTLGFRGEALASISSVSHFELKTRKAGNSLGTLLRSDGGVIETPQPAQCEPGTSIAVRNLFFNVPARRKFLKSNATEFKHIHETVKAFVLSYPEIEWRMMNDDEELFHFRTSDVRERLSHFYGEGFGESLIEVTEENDYMTIGGYLGKPGMMVRQKYDQYFFINRRLIQNRMLVQAVQQAYGELLEERQSPFALLFLGLDPSLVDVNVHPAKLEVRFEDEKSIRSMVYPVVKRAVRTADFSSEASFAAPSAPTVSGEVDLPEVSSRKLSYSSFSGKASTTGDLYRNYRAGAFSAPSSVSPMLFDSSLETSLSAGSRPTPMVQESLLTPSVDQPDTGDGENPVAPEKEPKIWQLHNKYIICQIKTGLMIIDQHVAHERVLYERAIDIMNEAAPNSQQLLFPQKIDLKPWQYEVFEEISDELYRLGFNIRPFGGMSVMIEGVPPDVRDGAEATILQDMIAEYQENAAKLKLEKRDNLAKSYSCRNAIMTGQKLSVEEMRMLIDRLFATRMPYVCPHGRPVIIRLSLGELDRMFGRT.

The disordered stretch occupies residues 416–436 (LTPSVDQPDTGDGENPVAPEK).

This sequence belongs to the DNA mismatch repair MutL/HexB family.

Functionally, this protein is involved in the repair of mismatches in DNA. It is required for dam-dependent methyl-directed DNA mismatch repair. May act as a 'molecular matchmaker', a protein that promotes the formation of a stable complex between two or more DNA-binding proteins in an ATP-dependent manner without itself being part of a final effector complex. The protein is DNA mismatch repair protein MutL of Chlorobaculum tepidum (strain ATCC 49652 / DSM 12025 / NBRC 103806 / TLS) (Chlorobium tepidum).